A 382-amino-acid polypeptide reads, in one-letter code: Galactokinase (382 aa).

34 to 37 (EHTD) serves as a coordination point for substrate. Position 124–130 (124–130 (GAGLSSS)) interacts with ATP. Mg(2+) contacts are provided by Ser-130 and Glu-162. Residue Asp-174 is the Proton acceptor of the active site. Tyr-223 contacts substrate.

It belongs to the GHMP kinase family. GalK subfamily.

It localises to the cytoplasm. The catalysed reaction is alpha-D-galactose + ATP = alpha-D-galactose 1-phosphate + ADP + H(+). It functions in the pathway carbohydrate metabolism; galactose metabolism. In terms of biological role, catalyzes the transfer of the gamma-phosphate of ATP to D-galactose to form alpha-D-galactose-1-phosphate (Gal-1-P). This Cronobacter sakazakii (strain ATCC BAA-894) (Enterobacter sakazakii) protein is Galactokinase.